We begin with the raw amino-acid sequence, 79 residues long: Defensin-1 (79 aa).

An N-terminal signal peptide occupies residues 1–23 (MKFLNVVAIALLVVACLAVYSNA). Disulfide bonds link C42–C69, C55–C75, and C59–C77.

It belongs to the invertebrate defensin family. Type 1 subfamily.

Its subcellular location is the secreted. This is Defensin-1 (SMD1) from Stomoxys calcitrans (Stable fly).